Reading from the N-terminus, the 245-residue chain is 1-(5-phosphoribosyl)-5-[(5-phosphoribosylamino)methylideneamino] imidazole-4-carboxamide isomerase (245 aa).

Aspartate 7 serves as the catalytic Proton acceptor. Aspartate 129 serves as the catalytic Proton donor.

It belongs to the HisA/HisF family.

The protein resides in the cytoplasm. The enzyme catalyses 1-(5-phospho-beta-D-ribosyl)-5-[(5-phospho-beta-D-ribosylamino)methylideneamino]imidazole-4-carboxamide = 5-[(5-phospho-1-deoxy-D-ribulos-1-ylimino)methylamino]-1-(5-phospho-beta-D-ribosyl)imidazole-4-carboxamide. It functions in the pathway amino-acid biosynthesis; L-histidine biosynthesis; L-histidine from 5-phospho-alpha-D-ribose 1-diphosphate: step 4/9. The protein is 1-(5-phosphoribosyl)-5-[(5-phosphoribosylamino)methylideneamino] imidazole-4-carboxamide isomerase of Aliivibrio fischeri (strain ATCC 700601 / ES114) (Vibrio fischeri).